We begin with the raw amino-acid sequence, 523 residues long: 2-isopropylmalate synthase (523 aa).

The Pyruvate carboxyltransferase domain maps to 5-267 (VIIFDTTLRD…HTNINHHEIW (263 aa)). Mn(2+)-binding residues include aspartate 14, histidine 202, histidine 204, and asparagine 238. A regulatory domain region spans residues 392–523 (RLDYFSVQSG…QNKENNKETV (132 aa)).

The protein belongs to the alpha-IPM synthase/homocitrate synthase family. LeuA type 1 subfamily. In terms of assembly, homodimer. Mn(2+) is required as a cofactor.

It is found in the cytoplasm. It carries out the reaction 3-methyl-2-oxobutanoate + acetyl-CoA + H2O = (2S)-2-isopropylmalate + CoA + H(+). The protein operates within amino-acid biosynthesis; L-leucine biosynthesis; L-leucine from 3-methyl-2-oxobutanoate: step 1/4. Catalyzes the condensation of the acetyl group of acetyl-CoA with 3-methyl-2-oxobutanoate (2-ketoisovalerate) to form 3-carboxy-3-hydroxy-4-methylpentanoate (2-isopropylmalate). The protein is 2-isopropylmalate synthase of Salmonella paratyphi A (strain ATCC 9150 / SARB42).